The primary structure comprises 277 residues: Phosphate import ATP-binding protein PstB (277 aa).

The region spanning 31-272 (LEVPGLNLFY…PAKKQTEDYI (242 aa)) is the ABC transporter domain. ATP is bound at residue 63 to 70 (GPSGCGKS).

Belongs to the ABC transporter superfamily. Phosphate importer (TC 3.A.1.7) family. The complex is composed of two ATP-binding proteins (PstB), two transmembrane proteins (PstC and PstA) (Potential). PstS is missing in this species.

It localises to the cell inner membrane. The enzyme catalyses phosphate(out) + ATP + H2O = ADP + 2 phosphate(in) + H(+). In terms of biological role, part of the ABC transporter complex PstSACB involved in phosphate import. Responsible for energy coupling to the transport system. The protein is Phosphate import ATP-binding protein PstB of Pseudomonas aeruginosa (strain ATCC 15692 / DSM 22644 / CIP 104116 / JCM 14847 / LMG 12228 / 1C / PRS 101 / PAO1).